A 391-amino-acid polypeptide reads, in one-letter code: Casein kinase II subunit alpha (391 aa).

Residues 36 to 41 (QDDYQL) form an interaction with beta subunit region. Positions 39-324 (YQLVRKLGRG…AREAMEHPYF (286 aa)) constitute a Protein kinase domain. ATP is bound by residues 45–53 (LGRGKYSEV) and K68. The active-site Proton acceptor is the D156. Polar residues predominate over residues 335–346 (GSSNMPGGSTPV). The tract at residues 335-363 (GSSNMPGGSTPVSSASMMSGISSVPTPSP) is disordered. Over residues 347–357 (SSASMMSGISS) the composition is skewed to low complexity.

The protein belongs to the protein kinase superfamily. Ser/Thr protein kinase family. CK2 subfamily. In terms of assembly, tetramer composed of an alpha chain, an alpha' and two beta chains. Interacts with RNPS1.

The protein resides in the nucleus. The catalysed reaction is L-seryl-[protein] + ATP = O-phospho-L-seryl-[protein] + ADP + H(+). It carries out the reaction L-threonyl-[protein] + ATP = O-phospho-L-threonyl-[protein] + ADP + H(+). Catalytic subunit of a constitutively active serine/threonine-protein kinase complex that phosphorylates a large number of substrates containing acidic residues C-terminal to the phosphorylated serine or threonine. Regulates numerous cellular processes, such as cell cycle progression, apoptosis and transcription, as well as viral infection. May act as a regulatory node which integrates and coordinates numerous signals leading to an appropriate cellular response. During mitosis, functions as a component of the p53/TP53-dependent spindle assembly checkpoint (SAC) that maintains cyclin-B-CDK1 activity and G2 arrest in response to spindle damage. Can also negatively regulate apoptosis. Phosphorylates the caspases CASP9 and CASP2 and the apoptotic regulator NOL3. Phosphorylation protects CASP9 from cleavage and activation by CASP8, and inhibits the dimerization of CASP2 and activation of CASP8. Plays an important role in the circadian clock function by phosphorylating BMAL1. The protein is Casein kinase II subunit alpha (CSNK2A1) of Gallus gallus (Chicken).